We begin with the raw amino-acid sequence, 350 residues long: Protein RecA (350 aa).

67–74 contributes to the ATP binding site; the sequence is GPESSGKT.

This sequence belongs to the RecA family.

It is found in the cytoplasm. Can catalyze the hydrolysis of ATP in the presence of single-stranded DNA, the ATP-dependent uptake of single-stranded DNA by duplex DNA, and the ATP-dependent hybridization of homologous single-stranded DNAs. It interacts with LexA causing its activation and leading to its autocatalytic cleavage. This chain is Protein RecA, found in Mycobacterium avium (strain 104).